We begin with the raw amino-acid sequence, 100 residues long: Elevenin (100 aa).

The signal sequence occupies residues 1-24; the sequence is MALSQKALLVLVLSMLLTASDSWA. An intrachain disulfide couples cysteine 29 to cysteine 38. A propeptide spanning residues 44-100 is cleaved from the precursor; that stretch reads KRGGDSLSVGGSAELDDTLTDPFLKSEEPKEWRELTRLSRVLQTFLSHPTGEMEQHD.

Belongs to the elevenin family. In terms of assembly, monomer. As to expression, expressed by the venom duct.

It localises to the secreted. Functionally, may mimic the function of prey elevenin neuropeptide. In vivo, intracranial injection in mice induces hyperactivity. The polypeptide is Elevenin (Conus ammiralis (Admiral cone)).